A 428-amino-acid chain; its full sequence is Elongation factor 1-alpha (428 aa).

Residues 5–215 (KPHINIVFIG…ALDQMPEPPK (211 aa)) form the tr-type G domain. Positions 14 to 21 (GHVDHGKS) are G1. Position 14–21 (14–21 (GHVDHGKS)) interacts with GTP. Ser21 provides a ligand contact to Mg(2+). The tract at residues 68–72 (GITID) is G2. A G3 region spans residues 89-92 (DAPG). Residues 89–93 (DAPGH) and 144–147 (NKMD) each bind GTP. Positions 144-147 (NKMD) are G4. Residues 181–183 (SAW) are G5.

This sequence belongs to the TRAFAC class translation factor GTPase superfamily. Classic translation factor GTPase family. EF-Tu/EF-1A subfamily.

Its subcellular location is the cytoplasm. The catalysed reaction is GTP + H2O = GDP + phosphate + H(+). In terms of biological role, GTP hydrolase that promotes the GTP-dependent binding of aminoacyl-tRNA to the A-site of ribosomes during protein biosynthesis. In Thermococcus celer, this protein is Elongation factor 1-alpha.